The following is a 180-amino-acid chain: MSTTIDNLDGGVEVGEVGEVGEETSLYFNSFNWKELKRENNRDNVEMWCNIHDGEEHTFEELASFYAVCIRDQFVEMKYNYRDLKLHKITFIAKSKYGLYDSLIPQHNHNHGNNLQQTFLFHSNGLENPYFEENIIKFSRESINLVRYYFEIYYGNSKYLKNWSILGDSDEYYCKMAKFK.

This is an uncharacterized protein from Dictyostelium discoideum (Social amoeba).